Consider the following 290-residue polypeptide: Hsp70 nucleotide exchange factor FES1 (290 aa).

At serine 12 the chain carries Phosphoserine. ARM repeat units follow at residues 13-57, 76-116, 120-161, 164-205, 211-251, and 253-290; these read QGDK…NPEV, LDNA…TAVQ, DSQN…NLIR, KDIS…AYLS, ENII…HLIS, and GIKFNEQELHKLNEGYKHIEPLKDRLNEDDYLAVKYVL.

Belongs to the FES1 family. In terms of assembly, interacts with the Hsp70 chaperones SSA1 and SSB1.

Its subcellular location is the cytoplasm. In terms of biological role, involved in protein translation, propagation of [PSI+] prions, and polyamine tolerance. Functions as a nucleotide exchange factor (NEF), which accelerates the release of ADP, for the cytosolic Hsp70 chaperone SSA1 and the ribosome-associated Hsp70 chaperone SSB1. Required for fully efficient Hsp70-mediated folding of proteins. This is Hsp70 nucleotide exchange factor FES1 (FES1) from Saccharomyces cerevisiae (strain ATCC 204508 / S288c) (Baker's yeast).